Reading from the N-terminus, the 296-residue chain is Light-independent protochlorophyllide reductase iron-sulfur ATP-binding protein (296 aa).

Residues 10 to 15 (GIGKST) and Lys-39 contribute to the ATP site. Mg(2+) is bound at residue Ser-14. The [4Fe-4S] cluster site is built by Cys-95 and Cys-129. 180–181 (NR) provides a ligand contact to ATP.

Belongs to the NifH/BchL/ChlL family. As to quaternary structure, homodimer. Protochlorophyllide reductase is composed of three subunits; ChlL, ChlN and ChlB. [4Fe-4S] cluster serves as cofactor.

Its subcellular location is the plastid. The protein resides in the chloroplast. It catalyses the reaction chlorophyllide a + oxidized 2[4Fe-4S]-[ferredoxin] + 2 ADP + 2 phosphate = protochlorophyllide a + reduced 2[4Fe-4S]-[ferredoxin] + 2 ATP + 2 H2O. It functions in the pathway porphyrin-containing compound metabolism; chlorophyll biosynthesis (light-independent). Component of the dark-operative protochlorophyllide reductase (DPOR) that uses Mg-ATP and reduced ferredoxin to reduce ring D of protochlorophyllide (Pchlide) to form chlorophyllide a (Chlide). This reaction is light-independent. The L component serves as a unique electron donor to the NB-component of the complex, and binds Mg-ATP. The sequence is that of Light-independent protochlorophyllide reductase iron-sulfur ATP-binding protein from Chlorokybus atmophyticus (Soil alga).